Reading from the N-terminus, the 67-residue chain is DNA-directed RNA polymerase subunit omega (67 aa).

Belongs to the RNA polymerase subunit omega family. As to quaternary structure, the RNAP catalytic core consists of 2 alpha, 1 beta, 1 beta' and 1 omega subunit. When a sigma factor is associated with the core the holoenzyme is formed, which can initiate transcription.

The catalysed reaction is RNA(n) + a ribonucleoside 5'-triphosphate = RNA(n+1) + diphosphate. Promotes RNA polymerase assembly. Latches the N- and C-terminal regions of the beta' subunit thereby facilitating its interaction with the beta and alpha subunits. In Ralstonia nicotianae (strain ATCC BAA-1114 / GMI1000) (Ralstonia solanacearum), this protein is DNA-directed RNA polymerase subunit omega.